We begin with the raw amino-acid sequence, 152 residues long: Em-like protein GEA1 (152 aa).

Composition is skewed to basic and acidic residues over residues 1-17 (MASKQLSREELDEKAKQ) and 32-63 (EAQEHLAEGRSKGGQTRKEQLGHEGYQEIGHK). The tract at residues 1–63 (MASKQLSREE…HEGYQEIGHK (63 aa)) is disordered. A run of 4 repeats spans residues 44–63 (GGQTRKEQLGHEGYQEIGHK), 64–83 (GGEARKEQLGHEGYQEMGHK), 84–103 (GGEARKEQLGHEGYQEMGHK), and 104–123 (GGEARKEQLGHEGYKEMGRK). Residues 44–123 (GGQTRKEQLG…HEGYKEMGRK (80 aa)) are 4 X 20 AA tandem repeats. Residues 116–152 (GYKEMGRKGGLSTMEKSGGERAEEEGIEIDESKFTNK) form a disordered region.

It belongs to the small hydrophilic plant seed protein family. In seeds only. Specifically located to vascular bundles in the cotyledon and axis of the dry seed. Also found in the epiderm and outer layers of the cortex in the embryo axis.

Functionally, it is thought to provide protection for the cytoplasm during the desiccation stage of embryo development. The sequence is that of Em-like protein GEA1 (EM1) from Arabidopsis thaliana (Mouse-ear cress).